A 413-amino-acid chain; its full sequence is Argininosuccinate synthase (413 aa).

ATP is bound by residues 14–22 (AYSGGLDTS) and alanine 41. 2 residues coordinate L-citrulline: tyrosine 94 and serine 99. Glycine 124 is a binding site for ATP. L-aspartate-binding residues include threonine 126, asparagine 130, and aspartate 131. Asparagine 130 is an L-citrulline binding site. Positions 134, 185, 194, 270, and 282 each coordinate L-citrulline.

Belongs to the argininosuccinate synthase family. Type 1 subfamily. As to quaternary structure, homotetramer.

It is found in the cytoplasm. It carries out the reaction L-citrulline + L-aspartate + ATP = 2-(N(omega)-L-arginino)succinate + AMP + diphosphate + H(+). The protein operates within amino-acid biosynthesis; L-arginine biosynthesis; L-arginine from L-ornithine and carbamoyl phosphate: step 2/3. The chain is Argininosuccinate synthase from Hyphomonas neptunium (strain ATCC 15444).